A 1049-amino-acid polypeptide reads, in one-letter code: Ataxin-2-like protein (1049 aa).

Met1 carries the N-acetylmethionine modification. The disordered stretch occupies residues 1-54; sequence MLKPQPPQQTSQPQQPPPTQQAVARRSPGGTSPPNGGLPGPLTATAAPPGPPAA. Ser27 bears the Phosphoserine mark. Thr45 carries the phosphothreonine modification. Positions 96 to 119 are interaction with MPL; it reads SVRGQTTGKGPPQSPVFEGVYNNS. Ser109 is subject to Phosphoserine. Tyr116 carries the post-translational modification Phosphotyrosine. One can recognise a Sm domain in the interval 120–197; sequence RMLHFLTAVV…VLLVHFRNVD (78 aa). An N6-acetyllysine modification is found at Lys205. Ser236 carries the post-translational modification Phosphoserine. A Phosphotyrosine modification is found at Tyr262. Phosphoserine is present on Ser304. A Phosphotyrosine modification is found at Tyr307. Residues 314-326 are compositionally biased toward basic and acidic residues; sequence ENDDGRTEEEKHS. Disordered regions lie at residues 314 to 522, 554 to 573, 578 to 704, 736 to 772, 824 to 852, 868 to 944, and 999 to 1049; these read ENDD…RNLE, QFKL…FPSR, EAKG…LTAG, VSNS…PMMQ, SNPR…AEQP, HATQ…SSFP, and PQGH…PPGN. Positions 328-340 are enriched in polar residues; the sequence is VQRQGSGRESPSL. 2 positions are modified to phosphoserine: Ser333 and Ser337. Residue Lys346 forms a Glycyl lysine isopeptide (Lys-Gly) (interchain with G-Cter in SUMO2) linkage. Tyr347 is subject to Phosphotyrosine. Arg359 is modified (asymmetric dimethylarginine). The segment covering 361–378 has biased composition (low complexity); that stretch reads GVRCSSSRGGRPGLSSLP. Phosphoserine is present on residues Ser389, Ser407, and Ser453. Over residues 454-466 the composition is skewed to low complexity; that stretch reads PKSAAPAPVSASC. The segment covering 475 to 487 has biased composition (polar residues); the sequence is VASSASIPVTSSV. Phosphoserine occurs at positions 496 and 499. Residues 508–519 are compositionally biased toward basic and acidic residues; the sequence is DVKELPTKEPSR. Residues Ser560, Ser561, and Ser562 each carry the phosphoserine modification. The span at 578-587 shows a compositional bias: basic and acidic residues; that stretch reads EAKGKEKEVD. The residue at position 597 (Ser597) is a Phosphoserine. Thr635 carries the post-translational modification Phosphothreonine. Phosphoserine occurs at positions 637, 677, 683, and 687. Over residues 681–697 the composition is skewed to low complexity; it reads STSTPTSPGPRTHSTPS. 2 stretches are compositionally biased toward polar residues: residues 824 to 845 and 878 to 902; these read SNPR…STPQ and QPAT…QHQA. Low complexity predominate over residues 935–944; sequence SAQSPQSSFP. Over residues 1033 to 1042 the composition is skewed to polar residues; sequence QVQSHPSQQL.

The protein belongs to the ataxin-2 family. As to quaternary structure, interacts with MPL/TPOR and EPOR and dissociates after ligand stimulation. Interacts with DDX6, G3BP, and ATXN2. Interacts with PRMT1. Interacts with CIC and ATXN1. Post-translationally, thrombopoietin triggers the phosphorylation on tyrosine residues in a way that is dependent on MPL C-terminal domain. Asymmetrically dimethylated. Probably methylated by PRMT1. In terms of tissue distribution, expressed in cerebellum.

The protein resides in the membrane. It localises to the cytoplasm. Its subcellular location is the nucleus speckle. The protein localises to the cytoplasmic granule. Involved in the regulation of stress granule and P-body formation. This Mus musculus (Mouse) protein is Ataxin-2-like protein (Atxn2l).